A 224-amino-acid polypeptide reads, in one-letter code: Protein-L-isoaspartate O-methyltransferase (224 aa).

Residue S63 is part of the active site.

It belongs to the methyltransferase superfamily. L-isoaspartyl/D-aspartyl protein methyltransferase family.

The protein localises to the cytoplasm. It carries out the reaction [protein]-L-isoaspartate + S-adenosyl-L-methionine = [protein]-L-isoaspartate alpha-methyl ester + S-adenosyl-L-homocysteine. Functionally, catalyzes the methyl esterification of L-isoaspartyl residues in peptides and proteins that result from spontaneous decomposition of normal L-aspartyl and L-asparaginyl residues. It plays a role in the repair and/or degradation of damaged proteins. This Herpetosiphon aurantiacus (strain ATCC 23779 / DSM 785 / 114-95) protein is Protein-L-isoaspartate O-methyltransferase.